Here is a 198-residue protein sequence, read N- to C-terminus: Recombination protein RecR (198 aa).

The segment at 57–72 (CSVCGHITDQDPCYIC) adopts a C4-type zinc-finger fold. One can recognise a Toprim domain in the interval 80–175 (SVICVVQDPK…KLSRIAHGLP (96 aa)).

Belongs to the RecR family.

Functionally, may play a role in DNA repair. It seems to be involved in an RecBC-independent recombinational process of DNA repair. It may act with RecF and RecO. The chain is Recombination protein RecR from Bacillus subtilis (strain 168).